Here is a 1494-residue protein sequence, read N- to C-terminus: Neuropathy target esterase sws (1494 aa).

Residues M1–T35 lie on the Lumenal side of the membrane. A helical membrane pass occupies residues M36 to F56. Residues K57–L1494 are Cytoplasmic-facing. An a nucleoside 3',5'-cyclic phosphate-binding site is contributed by I176–R303. The span at A362 to A372 shows a compositional bias: low complexity. Disordered stretches follow at residues A362–G405 and N422–V452. Over residues G435 to Q449 the composition is skewed to polar residues. S443 is subject to Phosphoserine. A nucleoside 3',5'-cyclic phosphate contacts are provided by residues E474 to R601 and I590 to R717. The 167-residue stretch at L944–R1110 folds into the PNPLA domain. Residues G948–G953 carry the GXGXXG motif. The GXSXG motif lies at G975–G979. Catalysis depends on S977, which acts as the Nucleophile. Residue D1097 is the Proton acceptor of the active site. The DGA/G motif lies at D1097–G1099. Residues M1367–L1494 form a disordered region. The segment covering A1370 to A1381 has biased composition (polar residues). Composition is skewed to basic and acidic residues over residues S1389–S1420 and M1452–R1483. Polar residues predominate over residues S1484 to L1494.

This sequence belongs to the NTE family. As to quaternary structure, interacts with Pka-C3; interaction inhibits the catalytic function of Pka-C3 and the esterase activity of sws.

Its subcellular location is the endoplasmic reticulum membrane. The catalysed reaction is a 1-acyl-sn-glycero-3-phosphocholine + H2O = sn-glycerol 3-phosphocholine + a fatty acid + H(+). Functionally, phospholipase B that deacylates intracellular phosphatidylcholine (PtdCho), generating glycerophosphocholine (GroPtdCho). This deacylation occurs at both sn-2 and sn-1 positions of PtdCho. Its specific chemical modification by certain organophosphorus (OP) compounds leads to distal axonopathy. Plays a role in the signaling mechanism between neurons and glia that regulates glia wrapping during development of the adult brain. Essential for membrane lipid homeostasis and cell survival in both neurons and glia of the adult brain. This is Neuropathy target esterase sws from Drosophila pseudoobscura pseudoobscura (Fruit fly).